A 100-amino-acid polypeptide reads, in one-letter code: Small ribosomal subunit protein uS14c (100 aa).

This sequence belongs to the universal ribosomal protein uS14 family. Part of the 30S ribosomal subunit.

Its subcellular location is the plastid. It is found in the chloroplast. In terms of biological role, binds 16S rRNA, required for the assembly of 30S particles. The polypeptide is Small ribosomal subunit protein uS14c (Chaetosphaeridium globosum (Charophycean green alga)).